A 56-amino-acid chain; its full sequence is Turripeptide XIV-01 (56 aa).

A signal peptide spans 1-21 (MRFHVLLTVALLLTSLMSIEA). Positions 22 to 30 (KPVNGAEME) are excised as a propeptide.

Contains 2 disulfide bonds. As to expression, expressed by the venom duct.

Its subcellular location is the secreted. In Gemmula speciosa (Splendid gem-turris), this protein is Turripeptide XIV-01.